The sequence spans 791 residues: Ribosome biogenesis protein ERB1 (791 aa).

Residues 1–12 (MARKNSSLNGSE) show a composition bias toward polar residues. Disordered stretches follow at residues 1–60 (MARK…DDSD) and 68–87 (AEEENGQEEEYNTSDFSEEG). 2 stretches are compositionally biased toward acidic residues: residues 25 to 60 (ESELSDSEDERIEVDGLIDEEASENEAEEAEDDDSD) and 69 to 87 (EEENGQEEEYNTSDFSEEG). The segment at 254–372 (RFVPSKHEAK…LRKVPGYSES (119 aa)) is required for interaction with NOP7. Positions 372–408 (SVRERFERSLDLYLAPRVRKNKLNIDPESLIPELPST) are required for interaction with YTM1. WD repeat units lie at residues 424 to 463 (GHKGKIRTMSIDPTGLWLATGSDDGTVRVWEILTGREVYQ), 472 to 512 (NNDD…FEIE), 576 to 618 (TCRK…TQSP), 621 to 659 (KSKGIIMDAKFHPFKPQLLVCSQRYVRIYDLSQQVLIKK), 662 to 701 (PGARWLSTIDIHPRGDNLIASSFDKRVLWHDLDLASTPYK), 705 to 744 (YHEKAVRSVSFHKKLPLFCSAADDGNIHVFHATVYDDLMK), and 760 to 791 (VNSLGVLDTIWHPREAWLFSAGADKTARLWTT).

The protein belongs to the WD repeat BOP1/ERB1 family. Component of the NOP7 complex, composed of ERB1, NOP7 and YTM1. The complex is held together by ERB1, which interacts with NOP7 via its N-terminal domain and with YTM1 via a high-affinity interaction between the seven-bladed beta-propeller domains of the 2 proteins. The NOP7 complex associates with the 66S pre-ribosome.

The protein localises to the nucleus. The protein resides in the nucleolus. It is found in the nucleoplasm. Component of the NOP7 complex, which is required for maturation of the 25S and 5.8S ribosomal RNAs and formation of the 60S ribosome. This is Ribosome biogenesis protein ERB1 from Kluyveromyces lactis (strain ATCC 8585 / CBS 2359 / DSM 70799 / NBRC 1267 / NRRL Y-1140 / WM37) (Yeast).